Here is a 294-residue protein sequence, read N- to C-terminus: Protein ATC1/LIC4 (294 aa).

The segment at 114 to 178 (YTGKASLDKS…SSSLASSDAN (65 aa)) is disordered. The segment covering 130 to 145 (HKPDKEQKNYKIDKPT) has biased composition (basic and acidic residues). Over residues 153–175 (LKTTNEPMLSPASLSPSSSLASS) the composition is skewed to low complexity.

It localises to the cytoplasm. The protein localises to the nucleus. Functionally, involved in cation homeostasis and in the regulation of the cation stress signaling cascades. Also involved in bipolar budding. This Saccharomyces cerevisiae (strain ATCC 204508 / S288c) (Baker's yeast) protein is Protein ATC1/LIC4 (ATC1).